The sequence spans 481 residues: Glutamate--tRNA ligase (481 aa).

Positions 11–21 (PSPTGLLHIGN) match the 'HIGH' region motif. Residues 255–259 (KLSKR) carry the 'KMSKS' region motif. Lys258 contacts ATP.

The protein belongs to the class-I aminoacyl-tRNA synthetase family. Glutamate--tRNA ligase type 1 subfamily. In terms of assembly, monomer.

It localises to the cytoplasm. It carries out the reaction tRNA(Glu) + L-glutamate + ATP = L-glutamyl-tRNA(Glu) + AMP + diphosphate. In terms of biological role, catalyzes the attachment of glutamate to tRNA(Glu) in a two-step reaction: glutamate is first activated by ATP to form Glu-AMP and then transferred to the acceptor end of tRNA(Glu). This Streptococcus pyogenes serotype M3 (strain ATCC BAA-595 / MGAS315) protein is Glutamate--tRNA ligase.